A 136-amino-acid chain; its full sequence is Large ribosomal subunit protein uL16 (136 aa).

Belongs to the universal ribosomal protein uL16 family. Part of the 50S ribosomal subunit.

Functionally, binds 23S rRNA and is also seen to make contacts with the A and possibly P site tRNAs. In Enterobacter sp. (strain 638), this protein is Large ribosomal subunit protein uL16.